The following is a 377-amino-acid chain: Gap junction gamma-1 protein (377 aa).

Topologically, residues 1–18 (MSWSFLTRLLEEINNHST) are cytoplasmic. The chain crosses the membrane as a helical span at residues 19–39 (FVGKIWLTVLIIFRIVLTAVG). Over 40-75 (GESIYYDEQSKFTCNTHQPGCENVCYDAFAPLSHVR) the chain is Extracellular. A helical membrane pass occupies residues 76–96 (FWVFQIILITTPSIMYLGFAM). Topologically, residues 97–174 (HRIARQPDEQ…RRIKQDGLMK (78 aa)) are cytoplasmic. Positions 129–163 (DYEEAEDNQEEDPMICEEEEPEKDSEKGDKKKHDG) are disordered. Over residues 131 to 151 (EEAEDNQEEDPMICEEEEPEK) the composition is skewed to acidic residues. Residues 175 to 197 (VYVLQLLFRSVFEVGFLMGQYVL) form a helical membrane-spanning segment. The Extracellular portion of the chain corresponds to 198–228 (YGFEVIPFFVCSRNPCPHTVDCFVSRPTEKT). Residues 229–249 (IFLLIMYAVSALCLFLNLCEL) form a helical membrane-spanning segment. Residues 250-377 (FHLGIGGIRD…GVGSREKSGL (128 aa)) are Cytoplasmic-facing. 2 disordered regions span residues 266-286 (KEIQESRKKKPSAPPNYHSVL) and 341-377 (AHASRSSSPEANSIAAEQNRLNLAQEKGVGSREKSGL). The span at 344-362 (SRSSSPEANSIAAEQNRLN) shows a compositional bias: polar residues.

This sequence belongs to the connexin family. Gamma-type subfamily. As to quaternary structure, a connexon is composed of a hexamer of connexins.

The protein resides in the cell membrane. Its subcellular location is the cell junction. It localises to the gap junction. Its function is as follows. One gap junction consists of a cluster of closely packed pairs of transmembrane channels, the connexons, through which materials of low MW diffuse from one cell to a neighboring cell. The polypeptide is Gap junction gamma-1 protein (gjc1) (Xenopus laevis (African clawed frog)).